Here is a 229-residue protein sequence, read N- to C-terminus: Heptaprenylglyceryl phosphate synthase (229 aa).

Lys12 serves as a coordination point for sn-glycerol 1-phosphate. Residues Asp14 and Thr40 each contribute to the Mg(2+) site. Sn-glycerol 1-phosphate contacts are provided by residues 159 to 164 (YIEYSG), Gly189, and 209 to 210 (GN).

Belongs to the GGGP/HepGP synthase family. Group I subfamily. As to quaternary structure, homodimer. Requires Mg(2+) as cofactor.

The enzyme catalyses sn-glycerol 1-phosphate + all-trans-heptaprenyl diphosphate = 3-heptaprenyl-sn-glycero-1-phosphate + diphosphate. It functions in the pathway membrane lipid metabolism; glycerophospholipid metabolism. Its function is as follows. Prenyltransferase that catalyzes in vivo the transfer of the heptaprenyl moiety of heptaprenyl pyrophosphate (HepPP; 35 carbon atoms) to the C3 hydroxyl of sn-glycerol-1-phosphate (G1P), producing heptaprenylglyceryl phosphate (HepGP). This reaction is an ether-bond-formation step in the biosynthesis of archaea-type G1P-based membrane lipids found in Bacillales. The polypeptide is Heptaprenylglyceryl phosphate synthase (Oceanobacillus iheyensis (strain DSM 14371 / CIP 107618 / JCM 11309 / KCTC 3954 / HTE831)).